The sequence spans 329 residues: UDP-glucose 4-epimerase (329 aa).

NAD(+) contacts are provided by residues 13-14 (YV), 33-38 (HNLSTG), 53-54 (DI), 76-80 (FAAFS), N95, T120, Y144, K148, and F172. Residues T120 and Y144 each contribute to the substrate site. Y144 serves as the catalytic Proton acceptor. Residues N173, 190–191 (HL), 207–209 (SVY), R221, and 281–284 (RGRD) each bind substrate.

This sequence belongs to the NAD(P)-dependent epimerase/dehydratase family. In terms of assembly, homodimer. The cofactor is NAD(+).

It carries out the reaction UDP-alpha-D-glucose = UDP-alpha-D-galactose. The protein operates within carbohydrate metabolism; galactose metabolism. In terms of biological role, involved in the metabolism of galactose. Catalyzes the conversion of UDP-galactose (UDP-Gal) to UDP-glucose (UDP-Glc) through a mechanism involving the transient reduction of NAD. This chain is UDP-glucose 4-epimerase (galE), found in Streptomyces lividans.